We begin with the raw amino-acid sequence, 76 residues long: Exodeoxyribonuclease 7 small subunit (76 aa).

This sequence belongs to the XseB family. As to quaternary structure, heterooligomer composed of large and small subunits.

Its subcellular location is the cytoplasm. It carries out the reaction Exonucleolytic cleavage in either 5'- to 3'- or 3'- to 5'-direction to yield nucleoside 5'-phosphates.. Functionally, bidirectionally degrades single-stranded DNA into large acid-insoluble oligonucleotides, which are then degraded further into small acid-soluble oligonucleotides. The protein is Exodeoxyribonuclease 7 small subunit of Legionella pneumophila (strain Paris).